The primary structure comprises 417 residues: Nucleosome assembly protein (417 aa).

The segment at 1-47 is disordered; sequence MSDPIRTKPKSSMQIDNAPTPHNTPASVLNPSYLKNGNPVRAQAQEQ. Residues 10-35 show a composition bias toward polar residues; sequence KSSMQIDNAPTPHNTPASVLNPSYLK. 2 positions are modified to phosphothreonine: T20 and T24. S27 carries the post-translational modification Phosphoserine. K50 is covalently cross-linked (Glycyl lysine isopeptide (Lys-Gly) (interchain with G-Cter in ubiquitin)). T53 is modified (phosphothreonine). Residues S69, S76, S82, S98, S104, and S140 each carry the phosphoserine modification. The segment at 143 to 362 is interaction with NBA1; the sequence is EQPKPEQIAK…IPRAVDWFTG (220 aa). A phosphoserine; by CK2 mark is found at S159 and S177. Positions 330-356 form a DNA-binding region, H-T-H motif; the sequence is LEEDLEERLALDYSIGEQLKDKLIPRA. A disordered region spans residues 364–417; that stretch reads ALEFEFEEDEEEADEDEDEEEDDDHGLEDDDGESAEEQDDFAGRPEQAPECKQS. Residues 367–403 show a composition bias toward acidic residues; sequence FEFEEDEEEADEDEDEEEDDDHGLEDDDGESAEEQDD. S397 bears the Phosphoserine; by CK2 mark. Residues 404 to 417 are compositionally biased toward basic and acidic residues; that stretch reads FAGRPEQAPECKQS.

Belongs to the nucleosome assembly protein (NAP) family. In terms of assembly, component of the GIN4 complex composed of at least BNI5, CDC3, CDC10, CDC11, CDC12, GIN4, NAP1 and SHS1 which forms a ring at the bud neck. Homodimer (in-vitro). Interacts with the B-type cyclin CLB2. Interacts with 60S ribosomal protein L18 (RPL18A or RPL18B), CKA2, CKI1, eukaryotic elongation factor 1 complex eEF1A (TEF1 or TEF2), FOL1, HSC82, HTA2, HTB2, HTZ1, KAP114, KCC4, NIS1, SSA1, SSA2, SSB1, SSC1, SHM1, SIP5 and TCO89. Interacts with NBA1. Interacts with histone H3/H4 heterodimers. In terms of processing, phosphorylation by CK2 is required for normal progression through S phase. CK2 phosphorylation is not required for correct bud formation nor histone binding.

It is found in the cytoplasm. The protein localises to the nucleus. Its subcellular location is the bud neck. Acidic protein, which assembles histones into an octamer (in vitro). Involved in the regulation of the localization and the function of the septins during mitosis. Involved in the function of B-type cyclins. In Saccharomyces cerevisiae (strain ATCC 204508 / S288c) (Baker's yeast), this protein is Nucleosome assembly protein.